Consider the following 204-residue polypeptide: Thiamine-phosphate synthase (204 aa).

4-amino-2-methyl-5-(diphosphooxymethyl)pyrimidine contacts are provided by residues 32 to 36 (QLRMK) and aspartate 64. The Mg(2+) site is built by aspartate 65 and aspartate 84. Residue threonine 103 coordinates 4-amino-2-methyl-5-(diphosphooxymethyl)pyrimidine. 129 to 131 (TTT) provides a ligand contact to 2-[(2R,5Z)-2-carboxy-4-methylthiazol-5(2H)-ylidene]ethyl phosphate. Lysine 132 is a binding site for 4-amino-2-methyl-5-(diphosphooxymethyl)pyrimidine. Glycine 165 serves as a coordination point for 2-[(2R,5Z)-2-carboxy-4-methylthiazol-5(2H)-ylidene]ethyl phosphate.

This sequence belongs to the thiamine-phosphate synthase family. Mg(2+) is required as a cofactor.

It carries out the reaction 2-[(2R,5Z)-2-carboxy-4-methylthiazol-5(2H)-ylidene]ethyl phosphate + 4-amino-2-methyl-5-(diphosphooxymethyl)pyrimidine + 2 H(+) = thiamine phosphate + CO2 + diphosphate. It catalyses the reaction 2-(2-carboxy-4-methylthiazol-5-yl)ethyl phosphate + 4-amino-2-methyl-5-(diphosphooxymethyl)pyrimidine + 2 H(+) = thiamine phosphate + CO2 + diphosphate. The catalysed reaction is 4-methyl-5-(2-phosphooxyethyl)-thiazole + 4-amino-2-methyl-5-(diphosphooxymethyl)pyrimidine + H(+) = thiamine phosphate + diphosphate. Its pathway is cofactor biosynthesis; thiamine diphosphate biosynthesis; thiamine phosphate from 4-amino-2-methyl-5-diphosphomethylpyrimidine and 4-methyl-5-(2-phosphoethyl)-thiazole: step 1/1. Functionally, condenses 4-methyl-5-(beta-hydroxyethyl)thiazole monophosphate (THZ-P) and 2-methyl-4-amino-5-hydroxymethyl pyrimidine pyrophosphate (HMP-PP) to form thiamine monophosphate (TMP). In Bacteroides fragilis (strain YCH46), this protein is Thiamine-phosphate synthase.